A 403-amino-acid polypeptide reads, in one-letter code: MKTIDELLAEGVAGKRVFVRADLNVPLDGTTITDDGRIRAVVPTIAKLAEAGARVVVASHLGRPKGAPDPAFSLAPAATRLGELLGAEVAFAADTVGESARAAVAGLADGRVAVVENLRFNAGETSKDDAERGAFADQLAQLADVYVGDGFGAVHRKHASVFDLPARLPHYAGYLIATEVGVLKKLTTDVHRPYAVVLGGAKVSDKLGVIDHLLERADRILIGGGMAYTFLKAKGYEVGSSLLQEDQIPAVREYLRRAEEKGVEFVLPVDVVVAPSFPDLKTKAPAHPTTVAADAMPAGQMGLDNGPETNKLYASKLADAATVFWNGPMGVFEHPDFADGTRAVAQALVDSSAFSVVGGGDSAAAVRILGFDENAFGHISTGGGASLEYLEGKTLPGLAALED.

Residues D22–N24, R37, H60–R63, R119, and R156 each bind substrate. ATP contacts are provided by residues K206, G302, E333, and G359–S362.

This sequence belongs to the phosphoglycerate kinase family. In terms of assembly, monomer.

It is found in the cytoplasm. The enzyme catalyses (2R)-3-phosphoglycerate + ATP = (2R)-3-phospho-glyceroyl phosphate + ADP. The protein operates within carbohydrate degradation; glycolysis; pyruvate from D-glyceraldehyde 3-phosphate: step 2/5. The chain is Phosphoglycerate kinase from Streptomyces griseus subsp. griseus (strain JCM 4626 / CBS 651.72 / NBRC 13350 / KCC S-0626 / ISP 5235).